Here is a 131-residue protein sequence, read N- to C-terminus: MAAQKVKKTRRRKERKNVEHGAAHIQSTFNNSIVTLTDAKGNALAWASAGGLGFKGSRKSTPFAAQMAAETAAKAAMEHGLKSVEVYVKGPGAGREAAIRSLQAAGLEVTLIKDVTPIPHNGCRPPKRRRV.

The span at 1–15 shows a compositional bias: basic residues; it reads MAAQKVKKTRRRKER. Positions 1 to 23 are disordered; it reads MAAQKVKKTRRRKERKNVEHGAA.

This sequence belongs to the universal ribosomal protein uS11 family. As to quaternary structure, part of the 30S ribosomal subunit. Interacts with proteins S7 and S18. Binds to IF-3.

Functionally, located on the platform of the 30S subunit, it bridges several disparate RNA helices of the 16S rRNA. Forms part of the Shine-Dalgarno cleft in the 70S ribosome. This is Small ribosomal subunit protein uS11 from Clostridium perfringens (strain 13 / Type A).